The sequence spans 1370 residues: Zinc finger MYM-type protein 3 (1370 aa).

Low complexity-rich tracts occupy residues 1–12 (MDPSDFPSPFDP) and 52–61 (PSSGALDLLD). Disordered regions lie at residues 1-72 (MDPS…DPGV) and 90-301 (PSPP…QRAG). A compositionally biased stretch (basic and acidic residues) spans 230 to 253 (ASEKPPERKRSERVRRAEPPKPEV). Phosphoserine is present on residues S263 and S267. The span at 263-279 (SDEDSDAMVDDPNDEDF) shows a compositional bias: acidic residues. Residues K308, K320, and K328 each participate in a glycyl lysine isopeptide (Lys-Gly) (interchain with G-Cter in SUMO2) cross-link. MYM-type zinc fingers lie at residues 332–366 (QLFCSSSCLTTFSKKPSGKKTCTFCKKEIWNTKDS), 378–422 (HEFC…LHEV), 429–464 (HRLCSDSCFSKFRANKGLKTNCCDQCGAYIYTKTGS), 477–511 (KRFCNTTCLGAYKKKNTRVYPCVWCKTLCKNFEML), 521–559 (SLFCSLCCTTSYKVKQAGLTGPPRPCSFCRRSLSDPCYY), 567–604 (YQFCSPSCWTKFQRTSPEGGIHLSCHYCHSLFSGKPEV), 612–646 (FQFCCRDCCEDFKRLRGVVSQCEHCRQEKLLHEKL), 653–692 (KSFCSEGCVLLYKQDFTKKLGLCCITCTYCSQTCQRGVTE), and 699–733 (WDFCSEDCKSKYLLWYCKAARCHACKRQGKLLETI). S464 is subject to Phosphoserine. A compositionally biased stretch (polar residues) spans 759–794 (NLDTQSGPESLLNSQSPESKPQTPSQTKVENSNTVR). Residues 759 to 830 (NLDTQSGPES…PPPPATPRKN (72 aa)) form a disordered region. Residues K778 and K786 each participate in a glycyl lysine isopeptide (Lys-Gly) (interchain with G-Cter in SUMO2) cross-link. The residue at position 795 (T795) is a Phosphothreonine. K804 participates in a covalent cross-link: Glycyl lysine isopeptide (Lys-Gly) (interchain with G-Cter in SUMO2). The segment covering 815 to 826 (APTPPPPPPPAT) has biased composition (pro residues). T817 and T826 each carry phosphothreonine. Residues K847, K861, K920, and K1275 each participate in a glycyl lysine isopeptide (Lys-Gly) (interchain with G-Cter in SUMO2) cross-link.

May be a component of a BHC histone deacetylase complex that contains HDAC1, HDAC2, HMG20B/BRAF35, KDM1A, RCOR1/CoREST, PHF21A/BHC80, ZMYM2, ZNF217, ZMYM3, GSE1 and GTF2I. Most abundant in brain, moderate in muscle and heart, low in other tissues except placenta.

The protein localises to the nucleus. Its function is as follows. Plays a role in the regulation of cell morphology and cytoskeletal organization. This Homo sapiens (Human) protein is Zinc finger MYM-type protein 3 (ZMYM3).